The following is a 210-amino-acid chain: ATP-dependent Clp protease proteolytic subunit (210 aa).

Catalysis depends on serine 106, which acts as the Nucleophile. Histidine 131 is an active-site residue.

Belongs to the peptidase S14 family. As to quaternary structure, fourteen ClpP subunits assemble into 2 heptameric rings which stack back to back to give a disk-like structure with a central cavity, resembling the structure of eukaryotic proteasomes.

Its subcellular location is the cytoplasm. The enzyme catalyses Hydrolysis of proteins to small peptides in the presence of ATP and magnesium. alpha-casein is the usual test substrate. In the absence of ATP, only oligopeptides shorter than five residues are hydrolyzed (such as succinyl-Leu-Tyr-|-NHMec, and Leu-Tyr-Leu-|-Tyr-Trp, in which cleavage of the -Tyr-|-Leu- and -Tyr-|-Trp bonds also occurs).. In terms of biological role, cleaves peptides in various proteins in a process that requires ATP hydrolysis. Has a chymotrypsin-like activity. Plays a major role in the degradation of misfolded proteins. The protein is ATP-dependent Clp protease proteolytic subunit of Azospirillum brasilense.